Here is a 483-residue protein sequence, read N- to C-terminus: Glutamyl-tRNA(Gln) amidotransferase subunit A (483 aa).

Active-site charge relay system residues include Lys76 and Ser151. The active-site Acyl-ester intermediate is Ser175.

The protein belongs to the amidase family. GatA subfamily. As to quaternary structure, heterotrimer of A, B and C subunits.

It carries out the reaction L-glutamyl-tRNA(Gln) + L-glutamine + ATP + H2O = L-glutaminyl-tRNA(Gln) + L-glutamate + ADP + phosphate + H(+). Allows the formation of correctly charged Gln-tRNA(Gln) through the transamidation of misacylated Glu-tRNA(Gln) in organisms which lack glutaminyl-tRNA synthetase. The reaction takes place in the presence of glutamine and ATP through an activated gamma-phospho-Glu-tRNA(Gln). The sequence is that of Glutamyl-tRNA(Gln) amidotransferase subunit A from Chromobacterium violaceum (strain ATCC 12472 / DSM 30191 / JCM 1249 / CCUG 213 / NBRC 12614 / NCIMB 9131 / NCTC 9757 / MK).